The sequence spans 389 residues: Tryptophan 2,3-dioxygenase (389 aa).

Residues 60–64 (FIITH) and Arg-131 each bind substrate. Position 316 (His-316) interacts with heme. Residue Thr-331 participates in substrate binding.

This sequence belongs to the tryptophan 2,3-dioxygenase family. As to quaternary structure, homotetramer. Dimer of dimers. Heme is required as a cofactor.

It carries out the reaction L-tryptophan + O2 = N-formyl-L-kynurenine. Its pathway is amino-acid degradation; L-tryptophan degradation via kynurenine pathway; L-kynurenine from L-tryptophan: step 1/2. The protein operates within pigment biosynthesis; ommochrome biosynthesis. Functionally, heme-dependent dioxygenase that catalyzes the oxidative cleavage of the L-tryptophan (L-Trp) pyrrole ring and converts L-tryptophan to N-formyl-L-kynurenine. Catalyzes the oxidative cleavage of the indole moiety. The chain is Tryptophan 2,3-dioxygenase from Mayetiola destructor (Hessian fly).